Reading from the N-terminus, the 232-residue chain is Lipoprotein-releasing system ATP-binding protein LolD (232 aa).

One can recognise an ABC transporter domain in the interval 11–232; the sequence is IEVTDLQRAF…LHDGRLIEEY (222 aa). 47–54 contributes to the ATP binding site; that stretch reads GPSGAGKS.

The protein belongs to the ABC transporter superfamily. Lipoprotein translocase (TC 3.A.1.125) family. As to quaternary structure, the complex is composed of two ATP-binding proteins (LolD) and two transmembrane proteins (LolC and LolE).

The protein resides in the cell inner membrane. Its function is as follows. Part of the ABC transporter complex LolCDE involved in the translocation of mature outer membrane-directed lipoproteins, from the inner membrane to the periplasmic chaperone, LolA. Responsible for the formation of the LolA-lipoprotein complex in an ATP-dependent manner. In Zymomonas mobilis subsp. mobilis (strain ATCC 31821 / ZM4 / CP4), this protein is Lipoprotein-releasing system ATP-binding protein LolD.